Here is a 111-residue protein sequence, read N- to C-terminus: Colipase (111 aa).

An N-terminal signal peptide occupies residues 1-16; the sequence is MKVLVLLLVTLAVVYA. Positions 17–21 are cleaved as a propeptide — enterostatin, activation peptide; it reads APDPR. 5 cysteine pairs are disulfide-bonded: C33/C44, C39/C55, C43/C77, C65/C85, and C79/C103.

It belongs to the colipase family. In terms of assembly, forms a 1:1 stoichiometric complex with pancreatic lipase. As to expression, expressed by the pancreas.

The protein resides in the secreted. Colipase is a cofactor of pancreatic lipase. It allows the lipase to anchor itself to the lipid-water interface. Without colipase the enzyme is washed off by bile salts, which have an inhibitory effect on the lipase. In terms of biological role, enterostatin has a biological activity as a satiety signal. The polypeptide is Colipase (CLPS) (Ictidomys tridecemlineatus (Thirteen-lined ground squirrel)).